The sequence spans 268 residues: Glutamate racemase (268 aa).

Substrate is bound by residues 14 to 15 (DS) and 46 to 47 (YG). C78 acts as the Proton donor/acceptor in catalysis. 79-80 (NS) contributes to the substrate binding site. Catalysis depends on C190, which acts as the Proton donor/acceptor. 191-192 (TH) is a binding site for substrate.

This sequence belongs to the aspartate/glutamate racemases family.

It catalyses the reaction L-glutamate = D-glutamate. It functions in the pathway cell wall biogenesis; peptidoglycan biosynthesis. Its function is as follows. Provides the (R)-glutamate required for cell wall biosynthesis. The polypeptide is Glutamate racemase (Treponema pallidum (strain Nichols)).